The chain runs to 66 residues: Beta-toxin Cbo1 (66 aa).

The LCN-type CS-alpha/beta domain occupies 1 to 66; sequence KEGYLVNHST…VWPLPKKTCN (66 aa). 4 disulfides stabilise this stretch: C12-C65, C16-C41, C25-C46, and C29-C48. Asparagine amide is present on N66.

The protein belongs to the long (4 C-C) scorpion toxin superfamily. Sodium channel inhibitor family. Beta subfamily. In terms of tissue distribution, expressed by the venom gland.

It is found in the secreted. In terms of biological role, beta toxins bind voltage-independently at site-4 of sodium channels and shift the voltage of activation toward more negative potentials thereby affecting sodium channel activation and promoting spontaneous and repetitive firing. Is active on the human voltage-gated sodium channel Nav1.6/SCN8A when tested at 200 nM. In vivo, is toxic to mice when intraperitoneally injected. This Centruroides bonito (Scorpion) protein is Beta-toxin Cbo1.